The chain runs to 193 residues: Ribonuclease HII (193 aa).

One can recognise an RNase H type-2 domain in the interval 3 to 192 (SLVAGIDEVG…VRAVIDRSSA (190 aa)). A divalent metal cation is bound by residues Asp9, Glu10, and Asp101.

It belongs to the RNase HII family. Mn(2+) serves as cofactor. The cofactor is Mg(2+).

The protein localises to the cytoplasm. The catalysed reaction is Endonucleolytic cleavage to 5'-phosphomonoester.. Its function is as follows. Endonuclease that specifically degrades the RNA of RNA-DNA hybrids. This Methylococcus capsulatus (strain ATCC 33009 / NCIMB 11132 / Bath) protein is Ribonuclease HII.